The sequence spans 322 residues: Probable arabinan endo-1,5-alpha-L-arabinosidase A (322 aa).

The N-terminal stretch at 1–19 is a signal peptide; sequence MYLPTLAASASLLVGVAHG. Aspartate 34 (proton acceptor) is an active-site residue. Glutamate 201 (proton donor) is an active-site residue.

Belongs to the glycosyl hydrolase 43 family.

It is found in the secreted. It catalyses the reaction Endohydrolysis of (1-&gt;5)-alpha-arabinofuranosidic linkages in (1-&gt;5)-arabinans.. The protein operates within glycan metabolism; L-arabinan degradation. Its function is as follows. Endo-1,5-alpha-L-arabinanase involved in degradation of pectin. Its preferred substrate is linear 1,5-alpha-L-arabinan. The polypeptide is Probable arabinan endo-1,5-alpha-L-arabinosidase A (abnA) (Emericella nidulans (strain FGSC A4 / ATCC 38163 / CBS 112.46 / NRRL 194 / M139) (Aspergillus nidulans)).